The following is a 334-amino-acid chain: Holliday junction branch migration complex subunit RuvB (334 aa).

The segment at 4 to 184 (ADRLIQPQLQ…FGIPLRLEFY (181 aa)) is large ATPase domain (RuvB-L). ATP-binding positions include Arg-24, Gly-65, Lys-68, Thr-69, Thr-70, 131-133 (EDY), Arg-174, Tyr-184, and Arg-221. Position 69 (Thr-69) interacts with Mg(2+). The small ATPAse domain (RuvB-S) stretch occupies residues 185 to 255 (NIKDLSTIVT…VADHALDLLD (71 aa)). The head domain (RuvB-H) stretch occupies residues 258-334 (NEGFDYMDRK…YQHFQLIKPE (77 aa)). DNA contacts are provided by Arg-294, Arg-313, and Arg-318.

This sequence belongs to the RuvB family. Homohexamer. Forms an RuvA(8)-RuvB(12)-Holliday junction (HJ) complex. HJ DNA is sandwiched between 2 RuvA tetramers; dsDNA enters through RuvA and exits via RuvB. An RuvB hexamer assembles on each DNA strand where it exits the tetramer. Each RuvB hexamer is contacted by two RuvA subunits (via domain III) on 2 adjacent RuvB subunits; this complex drives branch migration. In the full resolvosome a probable DNA-RuvA(4)-RuvB(12)-RuvC(2) complex forms which resolves the HJ.

It is found in the cytoplasm. It carries out the reaction ATP + H2O = ADP + phosphate + H(+). In terms of biological role, the RuvA-RuvB-RuvC complex processes Holliday junction (HJ) DNA during genetic recombination and DNA repair, while the RuvA-RuvB complex plays an important role in the rescue of blocked DNA replication forks via replication fork reversal (RFR). RuvA specifically binds to HJ cruciform DNA, conferring on it an open structure. The RuvB hexamer acts as an ATP-dependent pump, pulling dsDNA into and through the RuvAB complex. RuvB forms 2 homohexamers on either side of HJ DNA bound by 1 or 2 RuvA tetramers; 4 subunits per hexamer contact DNA at a time. Coordinated motions by a converter formed by DNA-disengaged RuvB subunits stimulates ATP hydrolysis and nucleotide exchange. Immobilization of the converter enables RuvB to convert the ATP-contained energy into a lever motion, pulling 2 nucleotides of DNA out of the RuvA tetramer per ATP hydrolyzed, thus driving DNA branch migration. The RuvB motors rotate together with the DNA substrate, which together with the progressing nucleotide cycle form the mechanistic basis for DNA recombination by continuous HJ branch migration. Branch migration allows RuvC to scan DNA until it finds its consensus sequence, where it cleaves and resolves cruciform DNA. The polypeptide is Holliday junction branch migration complex subunit RuvB (Shewanella putrefaciens (strain CN-32 / ATCC BAA-453)).